We begin with the raw amino-acid sequence, 487 residues long: Serine/threonine-protein kinase BSK8 (487 aa).

A lipid anchor (N-myristoyl glycine) is attached at glycine 2. Serine 20 carries the post-translational modification Phosphoserine. The region spanning 59–325 (ENIVSEHGER…DLEIASHQLL (267 aa)) is the Protein kinase domain. ATP is bound by residues 65–73 (HGERAPNVV), asparagine 71, lysine 87, and 133–135 (EFM). Aspartate 181 functions as the Proton acceptor in the catalytic mechanism. Residues 185-186 (YR) and asparagine 205 each bind ATP. Position 213 is a phosphoserine (serine 213).

This sequence belongs to the protein kinase superfamily. Ser/Thr protein kinase family. As to quaternary structure, interacts with ASK7/BIN2, BSK1, BSK5, BSK6 and BSK11. Interacts with BSL2. In terms of processing, phosphorylated by BRI1, ASK7/BIN2 and ASK9/BIL2.

It localises to the cell membrane. The enzyme catalyses L-seryl-[protein] + ATP = O-phospho-L-seryl-[protein] + ADP + H(+). It catalyses the reaction L-threonyl-[protein] + ATP = O-phospho-L-threonyl-[protein] + ADP + H(+). Functionally, probable serine/threonine kinase that acts as a positive regulator of brassinosteroid (BR) signaling downstream of the receptor kinase BRI1. Functions redundantly with BSK3, BSK4, BSK6 and BSK7. Involved in the regulation of sucrose-phosphate synthase 1 (SPS1) in the context of sucrose resuply after starvation. Activates BSL2, a phosphatase that may dephosphorylate SPS1, leading to the activation of SPS1. The chain is Serine/threonine-protein kinase BSK8 from Arabidopsis thaliana (Mouse-ear cress).